The primary structure comprises 345 residues: Protein RecA (345 aa).

65-72 (GPESSGKT) is a binding site for ATP.

This sequence belongs to the RecA family.

It localises to the cytoplasm. Its function is as follows. Can catalyze the hydrolysis of ATP in the presence of single-stranded DNA, the ATP-dependent uptake of single-stranded DNA by duplex DNA, and the ATP-dependent hybridization of homologous single-stranded DNAs. It interacts with LexA causing its activation and leading to its autocatalytic cleavage. This Stenotrophomonas maltophilia (strain R551-3) protein is Protein RecA.